The sequence spans 86 residues: MKNLIAELLVKLAQKEEEAKELTVQVEALEIVVTALLRHMEHDAQQALIQDIEQAIDQVTPCPPVNDHDAMLLQQYLKKLLRHPRS.

Residues 1–38 adopt a coiled-coil conformation; that stretch reads MKNLIAELLVKLAQKEEEAKELTVQVEALEIVVTALLR.

The protein belongs to the IraP family. In terms of assembly, interacts with RssB.

It localises to the cytoplasm. In terms of biological role, inhibits RpoS proteolysis by regulating RssB activity, thereby increasing the stability of the sigma stress factor RpoS especially during phosphate starvation, but also in stationary phase and during nitrogen starvation. Its effect on RpoS stability is due to its interaction with RssB, which probably blocks the interaction of RssB with RpoS, and the consequent delivery of the RssB-RpoS complex to the ClpXP protein degradation pathway. The protein is Anti-adapter protein IraP of Klebsiella pneumoniae subsp. pneumoniae (strain ATCC 700721 / MGH 78578).